We begin with the raw amino-acid sequence, 96 residues long: DNA-directed RNA polymerase subunit Rpo11 (96 aa).

It belongs to the archaeal Rpo11/eukaryotic RPB11/RPC19 RNA polymerase subunit family. As to quaternary structure, part of the RNA polymerase complex.

Its subcellular location is the cytoplasm. It carries out the reaction RNA(n) + a ribonucleoside 5'-triphosphate = RNA(n+1) + diphosphate. Functionally, DNA-dependent RNA polymerase (RNAP) catalyzes the transcription of DNA into RNA using the four ribonucleoside triphosphates as substrates. In Methanococcus maripaludis (strain C6 / ATCC BAA-1332), this protein is DNA-directed RNA polymerase subunit Rpo11.